The chain runs to 618 residues: 1-deoxy-D-xylulose-5-phosphate synthase (618 aa).

Residues H75 and 116-118 (GHS) contribute to the thiamine diphosphate site. D147 is a binding site for Mg(2+). Thiamine diphosphate contacts are provided by residues 148–149 (GA), N176, Y283, and E364. N176 is a binding site for Mg(2+).

Belongs to the transketolase family. DXPS subfamily. Homodimer. Mg(2+) serves as cofactor. Requires thiamine diphosphate as cofactor.

The catalysed reaction is D-glyceraldehyde 3-phosphate + pyruvate + H(+) = 1-deoxy-D-xylulose 5-phosphate + CO2. It participates in metabolic intermediate biosynthesis; 1-deoxy-D-xylulose 5-phosphate biosynthesis; 1-deoxy-D-xylulose 5-phosphate from D-glyceraldehyde 3-phosphate and pyruvate: step 1/1. Functionally, catalyzes the acyloin condensation reaction between C atoms 2 and 3 of pyruvate and glyceraldehyde 3-phosphate to yield 1-deoxy-D-xylulose-5-phosphate (DXP). The chain is 1-deoxy-D-xylulose-5-phosphate synthase from Thiobacillus denitrificans (strain ATCC 25259 / T1).